The chain runs to 554 residues: 2-succinyl-5-enolpyruvyl-6-hydroxy-3-cyclohexene-1-carboxylate synthase (554 aa).

It belongs to the TPP enzyme family. MenD subfamily. Homodimer. It depends on Mg(2+) as a cofactor. Requires Mn(2+) as cofactor. Thiamine diphosphate serves as cofactor.

It carries out the reaction isochorismate + 2-oxoglutarate + H(+) = 5-enolpyruvoyl-6-hydroxy-2-succinyl-cyclohex-3-ene-1-carboxylate + CO2. It functions in the pathway quinol/quinone metabolism; 1,4-dihydroxy-2-naphthoate biosynthesis; 1,4-dihydroxy-2-naphthoate from chorismate: step 2/7. The protein operates within quinol/quinone metabolism; menaquinone biosynthesis. In terms of biological role, catalyzes the thiamine diphosphate-dependent decarboxylation of 2-oxoglutarate and the subsequent addition of the resulting succinic semialdehyde-thiamine pyrophosphate anion to isochorismate to yield 2-succinyl-5-enolpyruvyl-6-hydroxy-3-cyclohexene-1-carboxylate (SEPHCHC). The sequence is that of 2-succinyl-5-enolpyruvyl-6-hydroxy-3-cyclohexene-1-carboxylate synthase from Flavobacterium johnsoniae (strain ATCC 17061 / DSM 2064 / JCM 8514 / BCRC 14874 / CCUG 350202 / NBRC 14942 / NCIMB 11054 / UW101) (Cytophaga johnsonae).